We begin with the raw amino-acid sequence, 1289 residues long: MNEKIQRINFGKIREGLSLPNLIEHQTKSYADFLQLSVAPQERKAEGLHGVFLEVFPIESYDGKVKLEYVNYEIGESKFSPIDCLRDGKTYAAPLYVTFRLKDEEGVKEEKVYMGELPMMTPQGSFIINGAERVIVNQLHRSPGICFESSFHSNGKTLYSFRIIPDRGSWLEVAFDTNDLLYVYLDRRKKRRKFLITTLLRALAAALSGPSSPLGSGGDEEIIRLFYTVEELNLSEGIDEDKVATKVLVSEVKDPHNPDVVLARAYEPVTRSVVRQLLDVGIQSISVVDVQYDDTLIKCLKKDPTKDPVEALKEIYRRLRPGDPPTESNAKLLLKRLLLDPKRYDLGRVGRYKLNQKLNIQVDPDIRILTWEDLVAATRYLIKLRKGEGITDDIDHLGSRRVRTVGELVANQCRMGLARTERLVKERMTLFDVNTEGMTPQKLINPKALSATIRDFFARSQLSQLMDQINPLSELTHKRRLSALGPGGLSRERAGFEVRDVHPSHYGRICPIETPEGPNIGLIATMASYSRFNDYGILETPYRKVLNGKVTNEIVYFTADQEENYVIAMANTAVSEDGTILDQRVAVRFRREFMEVEREKVEYMDVSPKQIVSVAAGLIPFLEHDDANRALMGSNMQRQAVPLIQPEAPIVGTGIEERVARDIQAVIVSEVDGTVSSVTGKEIIVTPTGSPVEQKKKKSKQGSEREGIVYKLNKFMRSNAGTCINQKPIVKKGQVVKKGDVLADGPSTQNGELALGRNLLVAFMPWNGYNFEDAIIVSERVVKEDLFTSIYIDEFEIVARDTKLGPEEITRDIPNVGDEALKNLGPDGIIRVGAEVKPGDILVGKITPKSETELAPEERLLRAIFGEKAADVKDSSLRVPSGTYGIVMDVRVSSGTARVRKEKINASEAKQKIKEIEERYDQKEEELREELTQALSNILLNEKIPLDVVNVETGEIIIPANRKITKVLLRKMAQAYDKIEIDPSPIRSKIFEIIGNFEAKFEQLRNDRELELDQIESGEDTEPGIIKQVKVFIANKRKLSVGDKMAGRHGNKGVVSKIVPVEDMPYLPDGTPVDIVLNPLGVPSRMNVGQVLETHLGIAAKKLGFNVATPVFDGVKEEKIREFLVKAGMDEDGKSILYDGRTGEMFNQRVVVGMIYMMKLNHMVADKIHARAVGPYSLVTQQPLGGKAQYGGQRFGEMEVWAMEAYGAAYILQELLTVKSDDVQGRTRIYESIVKGENYLETTTPESFNVLIKELQGLCLEVNIGQRSDVIGLSVKPTTPKALSGGEAA.

The protein belongs to the RNA polymerase beta chain family. As to quaternary structure, the RNAP catalytic core consists of 2 alpha, 1 beta, 1 beta' and 1 omega subunit. When a sigma factor is associated with the core the holoenzyme is formed, which can initiate transcription.

The catalysed reaction is RNA(n) + a ribonucleoside 5'-triphosphate = RNA(n+1) + diphosphate. DNA-dependent RNA polymerase catalyzes the transcription of DNA into RNA using the four ribonucleoside triphosphates as substrates. In Methylacidiphilum infernorum (isolate V4) (Methylokorus infernorum (strain V4)), this protein is DNA-directed RNA polymerase subunit beta.